A 123-amino-acid chain; its full sequence is Large ribosomal subunit protein uL29 (123 aa).

Belongs to the universal ribosomal protein uL29 family. In terms of assembly, component of the large ribosomal subunit.

It is found in the cytoplasm. Its function is as follows. Component of the large ribosomal subunit. The ribosome is a large ribonucleoprotein complex responsible for the synthesis of proteins in the cell. The sequence is that of Large ribosomal subunit protein uL29 (rpl35) from Xenopus tropicalis (Western clawed frog).